A 317-amino-acid polypeptide reads, in one-letter code: Carbonic anhydrase 5B, mitochondrial (317 aa).

The N-terminal 33 residues, methionine 1 to serine 33, are a transit peptide targeting the mitochondrion. Positions tyrosine 37–phenylalanine 296 constitute an Alpha-carbonic anhydrase domain. Residues histidine 130, histidine 132, and histidine 155 each contribute to the Zn(2+) site. Residue threonine 235–threonine 236 participates in substrate binding.

Belongs to the alpha-carbonic anhydrase family. Zn(2+) serves as cofactor.

Its subcellular location is the mitochondrion. The catalysed reaction is hydrogencarbonate + H(+) = CO2 + H2O. Mitochondrial carbonic anhydrase that catalyzes the reversible conversion of carbon dioxide to bicarbonate/HCO3. In Rattus norvegicus (Rat), this protein is Carbonic anhydrase 5B, mitochondrial (Ca5b).